We begin with the raw amino-acid sequence, 1866 residues long: Protein strawberry notch homolog (1866 aa).

Over residues 19–28 the composition is skewed to low complexity; it reads QQSSPTPSTS. 5 disordered regions span residues 19–63, 132–151, 156–253, 561–581, and 1112–1308; these read QQSS…HSSS, TAPT…IVPK, LFET…GLPI, GMAS…QKAK, and GLSG…ARGS. 2 stretches are compositionally biased toward polar residues: residues 37 to 63 and 134 to 146; these read QSFS…HSSS and PTVN…TPTV. Positions 161 to 176 are enriched in low complexity; sequence TADSPTPSGDTSTTAS. 2 stretches are compositionally biased toward polar residues: residues 191 to 203 and 210 to 228; these read DRQN…TARS and TPST…LTQR. Residues 229–239 show a composition bias toward low complexity; sequence SHTSSPASSAS. The segment covering 566–577 has biased composition (polar residues); sequence RLQTTPQPLTKS. Low complexity predominate over residues 1112-1126; that stretch reads GLSGIGRSSMSSSTG. The segment covering 1142–1152 has biased composition (acidic residues); that stretch reads DGSDDEVENDM. Basic and acidic residues predominate over residues 1164–1177; the sequence is ESAREEAEGARTLE. The span at 1194 to 1213 shows a compositional bias: acidic residues; sequence SSSDDSDEEVVKDEDEDEEA. Composition is skewed to basic and acidic residues over residues 1262 to 1281 and 1290 to 1304; these read RDEE…EERR and RRAE…EELQ.

This sequence belongs to the SBNO family. As to expression, expressed in the somatic gonad, neurons, hypodermal cells, seam cells, the excretory system, and intestinal cells (at protein level).

The protein localises to the nucleus. Transcriptional activator that functions upstream of the let-60/Ras and let-23/EGFR signaling pathways to positively regulate lin-3 expression and thereby promote vulval induction. Plays a role in excretory duct development. Plays a role in male tail development. The protein is Protein strawberry notch homolog of Caenorhabditis elegans.